We begin with the raw amino-acid sequence, 80 residues long: Defensin-like protein CAL1 (80 aa).

Positions 1 to 31 (MAPSRRMVASAFLLLAILVATEMGTTKVAEA) are cleaved as a signal peptide. Intrachain disulfides connect Cys-34–Cys-80, Cys-45–Cys-65, Cys-51–Cys-74, and Cys-55–Cys-76.

Belongs to the DEFL family. In terms of tissue distribution, expressed preferentially in root exodermis and xylem parenchyma cells in vasculature of root and flag leaf sheath.

It is found in the secreted. The protein localises to the extracellular space. In terms of biological role, plant defensin-like protein involved in accumulation of cadmium (Cd) in rice leaves. Mediates Cd efflux from cytosol into extracellular spaces via chelation. This drives Cd secretion from xylem parenchyma cells into the xylem vessels, hence lowering Cd levels in cytosol meanwhile promoting Cd translocation from roots to shoots. The protein is Defensin-like protein CAL1 of Oryza sativa subsp. japonica (Rice).